We begin with the raw amino-acid sequence, 75 residues long: UPF0352 protein YejL (75 aa).

Belongs to the UPF0352 family.

In Escherichia coli O127:H6 (strain E2348/69 / EPEC), this protein is UPF0352 protein YejL.